The following is a 594-amino-acid chain: Gamma-terpinene synthase, chloroplastic (594 aa).

A chloroplast-targeting transit peptide spans 1–44 (MATLSMQVSILSKEVKNVNNIGMRASKPMVARRVSTTRLRPICS). Mn(2+) contacts are provided by aspartate 347 and aspartate 351. The DDXXD motif motif lies at 347 to 351 (DDVYD). Homodimerization regions lie at residues 353–359 (YGTLDEL) and 425–462 (EAKW…FTLP). Mn(2+) is bound by residues aspartate 491 and glutamate 499.

It belongs to the terpene synthase family. Homodimer. Mn(2+) is required as a cofactor. Mg(2+) serves as cofactor. Expressed in peltate glandular trichomes.

It is found in the plastid. The protein localises to the chloroplast. The catalysed reaction is (2E)-geranyl diphosphate = gamma-terpinene + diphosphate. The enzyme catalyses (2E)-geranyl diphosphate = alpha-terpinene + diphosphate. It functions in the pathway secondary metabolite biosynthesis; terpenoid biosynthesis. Functionally, involved in the biosynthesis of phenolic monoterpenes natural products thymol and carvacrol which have a broad range of biological activities acting as antimicrobial compounds, insecticides, antioxidants and pharmaceutical agents. Monoterpene synthase which catalyzes the conversion of geranyl diphosphate (GPP) to gamma-terpinene and the minor products alpha-thujene, alpha-terpinene, myrcene, sabinene, (+)-R-limonene, alpha-pinene and alpha-phellandrene. In Origanum vulgare (Wild marjoram), this protein is Gamma-terpinene synthase, chloroplastic.